The following is a 374-amino-acid chain: Anhydro-N-acetylmuramic acid kinase (374 aa).

12–19 (GTSLDGVD) lines the ATP pocket.

It belongs to the anhydro-N-acetylmuramic acid kinase family.

The catalysed reaction is 1,6-anhydro-N-acetyl-beta-muramate + ATP + H2O = N-acetyl-D-muramate 6-phosphate + ADP + H(+). Its pathway is amino-sugar metabolism; 1,6-anhydro-N-acetylmuramate degradation. It participates in cell wall biogenesis; peptidoglycan recycling. Functionally, catalyzes the specific phosphorylation of 1,6-anhydro-N-acetylmuramic acid (anhMurNAc) with the simultaneous cleavage of the 1,6-anhydro ring, generating MurNAc-6-P. Is required for the utilization of anhMurNAc either imported from the medium or derived from its own cell wall murein, and thus plays a role in cell wall recycling. In Enterobacter sp. (strain 638), this protein is Anhydro-N-acetylmuramic acid kinase.